Consider the following 424-residue polypeptide: Tyrosine--tRNA ligase (424 aa).

An L-tyrosine-binding site is contributed by tyrosine 37. The short motif at 42 to 51 (PTADSLHLGH) is the 'HIGH' region element. Position 144 is an N6-acetyllysine (lysine 144). Residues tyrosine 175 and glutamine 179 each coordinate L-tyrosine. The 'KMSKS' region motif lies at 235-239 (KFGKT). Lysine 238 is a binding site for ATP. Positions 357 to 414 (ADLMQALVDSELQPSRGQARKTIASNAITINGEKQSDPEYFFKEEDRLFGRFTLLRRG) constitute an S4 RNA-binding domain.

The protein belongs to the class-I aminoacyl-tRNA synthetase family. TyrS type 1 subfamily. Homodimer.

The protein localises to the cytoplasm. The catalysed reaction is tRNA(Tyr) + L-tyrosine + ATP = L-tyrosyl-tRNA(Tyr) + AMP + diphosphate + H(+). Catalyzes the attachment of tyrosine to tRNA(Tyr) in a two-step reaction: tyrosine is first activated by ATP to form Tyr-AMP and then transferred to the acceptor end of tRNA(Tyr). The polypeptide is Tyrosine--tRNA ligase (Shigella boydii serotype 4 (strain Sb227)).